The chain runs to 382 residues: N-acetyldiaminopimelate deacetylase (382 aa).

Asp-73 is an active-site residue. The Proton acceptor role is filled by Glu-132.

Belongs to the peptidase M20A family. N-acetyldiaminopimelate deacetylase subfamily.

It catalyses the reaction N-acetyl-(2S,6S)-2,6-diaminopimelate + H2O = (2S,6S)-2,6-diaminopimelate + acetate. It functions in the pathway amino-acid biosynthesis; L-lysine biosynthesis via DAP pathway; LL-2,6-diaminopimelate from (S)-tetrahydrodipicolinate (acetylase route): step 3/3. In terms of biological role, catalyzes the conversion of N-acetyl-diaminopimelate to diaminopimelate and acetate. The protein is N-acetyldiaminopimelate deacetylase of Oenococcus oeni (strain ATCC BAA-331 / PSU-1).